Reading from the N-terminus, the 175-residue chain is Ribulose bisphosphate carboxylase small subunit, chloroplastic (175 aa).

A chloroplast-targeting transit peptide spans 1 to 46 (MAPSVMASSATTVAPFQGLKSTAGMPVARRSGNSSFGNVSNGGRIR). Positions 60-64 (ETLSY) are interaction with large subunit.

It belongs to the RuBisCO small chain family. As to quaternary structure, heterohexadecamer of 8 large and 8 small subunits.

It localises to the plastid. It is found in the chloroplast. Its function is as follows. RuBisCO catalyzes two reactions: the carboxylation of D-ribulose 1,5-bisphosphate, the primary event in carbon dioxide fixation, as well as the oxidative fragmentation of the pentose substrate. Both reactions occur simultaneously and in competition at the same active site. Although the small subunit is not catalytic it is essential for maximal activity. The polypeptide is Ribulose bisphosphate carboxylase small subunit, chloroplastic (Oryza sativa subsp. indica (Rice)).